The primary structure comprises 461 residues: tRNA modification GTPase MnmE (461 aa).

(6S)-5-formyl-5,6,7,8-tetrahydrofolate contacts are provided by Arg23, Glu88, and Arg127. The TrmE-type G domain occupies 223–382; that stretch reads GLNTVIVGKP…VEEALVEIVY (160 aa). Position 233 (Asn233) interacts with K(+). GTP contacts are provided by residues 233–238, 252–258, and 277–280; these read NVGKSS, TEVPGTT, and DTAG. Ser237 lines the Mg(2+) pocket. Thr252, Val254, and Thr257 together coordinate K(+). Thr258 is a binding site for Mg(2+). Residue Lys461 participates in (6S)-5-formyl-5,6,7,8-tetrahydrofolate binding.

Belongs to the TRAFAC class TrmE-Era-EngA-EngB-Septin-like GTPase superfamily. TrmE GTPase family. Homodimer. Heterotetramer of two MnmE and two MnmG subunits. The cofactor is K(+).

Its subcellular location is the cytoplasm. Exhibits a very high intrinsic GTPase hydrolysis rate. Involved in the addition of a carboxymethylaminomethyl (cmnm) group at the wobble position (U34) of certain tRNAs, forming tRNA-cmnm(5)s(2)U34. This chain is tRNA modification GTPase MnmE, found in Alkaliphilus metalliredigens (strain QYMF).